A 408-amino-acid polypeptide reads, in one-letter code: Argininosuccinate synthase (408 aa).

ATP-binding positions include 10–18 (AYSGGLDTS) and Ala37. L-citrulline contacts are provided by Tyr90 and Ser95. Gly120 is an ATP binding site. L-aspartate contacts are provided by Thr122, Asn126, and Asp127. Residue Asn126 coordinates L-citrulline. L-citrulline is bound by residues Arg130, Ser182, Ser191, Glu267, and Tyr279.

The protein belongs to the argininosuccinate synthase family. Type 1 subfamily. In terms of assembly, homotetramer.

It localises to the cytoplasm. The enzyme catalyses L-citrulline + L-aspartate + ATP = 2-(N(omega)-L-arginino)succinate + AMP + diphosphate + H(+). The protein operates within amino-acid biosynthesis; L-arginine biosynthesis; L-arginine from L-ornithine and carbamoyl phosphate: step 2/3. The sequence is that of Argininosuccinate synthase from Paraburkholderia xenovorans (strain LB400).